A 96-amino-acid polypeptide reads, in one-letter code: MSRVCELSGKAPMTGNTVSHANNKSRRRFLPNLNDVTLISDVLGQSFKLRISAAALRTVDHRGGLDAFLAKAKDDELSVKARAIKKEIEKAQATAA.

Residues methionine 1–asparagine 23 are disordered.

The protein belongs to the bacterial ribosomal protein bL28 family.

The polypeptide is Large ribosomal subunit protein bL28 (Cereibacter sphaeroides (strain ATCC 17029 / ATH 2.4.9) (Rhodobacter sphaeroides)).